Consider the following 34-residue polypeptide: Trypsin inhibitor 1 (34 aa).

Positions 1–34 (SGSDGGVCPKILQRCRRDSDCPGACICRGNGYCG) form a cross-link, cyclopeptide (Ser-Gly). 3 disulfide bridges follow: C8–C25, C15–C27, and C21–C33.

This is a cyclic peptide.

Its subcellular location is the secreted. Inhibits trypsin; probably participates in a plant defense mechanism. This chain is Trypsin inhibitor 1, found in Momordica cochinchinensis (Spiny bitter cucumber).